The primary structure comprises 214 residues: Large ribosomal subunit protein uL1 (214 aa).

The protein belongs to the universal ribosomal protein uL1 family. In terms of assembly, part of the 50S ribosomal subunit.

Its function is as follows. Binds directly to 23S rRNA. Probably involved in E site tRNA release. In terms of biological role, protein L1 is also a translational repressor protein, it controls the translation of its operon by binding to its mRNA. The sequence is that of Large ribosomal subunit protein uL1 from Methanopyrus kandleri (strain AV19 / DSM 6324 / JCM 9639 / NBRC 100938).